We begin with the raw amino-acid sequence, 865 residues long: MKAKMKKHACTYPGCSKAFTRAEHLRRHSLNHETISNSQGYTCQRCMTHFSRADLLSRHLDRHAKKDAEAGGFGKGVLETRKRMRRAEDGSIVLRPPKRPSRHQQKTGPPVGAPLSSSGSVSAGSGRSSRSPDVSLHAAQAPVSPPRSASDPVSVSGVSIDDDGTDPDPMLAPMMPGGPFEPYVEPIPGQFDAADGSWGGFDALGDGMMLDTATDFNLPFAATGNYNWLFDVSSLDDAFHHLELPLGPDLVPFANSHGNYASVNTMELSGAGAENVQDSMLNLDLDIDLNGLPAGFVHDQGPDGSSASVLLQAASFVERGNINGSDPKRDFPDLDWMAGAPPIESTVPLRPQLSEDARRGILTLIAQSPPVDIHGQPLNLDSPLLSLSALQSYSDLFFSRFNTTYPLIHSATFDPNKTEPVFLASILSMGATYSSREAHQLAVGIHDGLRNQLFCHGAFSPQPDELWVLQAMLLIDCFGKMRAGPKQRERAQLFHCVLIKLIRRSTCCSIRADTHSDPGLGGLELEDAWKRAMDAEQRKRLAFQCFMWDTEHSVLFSQSLCMSAFEIRSSLPCSPAAWEAHTAEEWSRHASRDTEHAFLPVLKGYITPGSVSRPRDLNRFSRMVVLHGLMSISADLKRRDQTTLRAETPERVGAWTPRMGRAYDLWKADFDADCLNMKLGPVQVSADETRRFTSLKAAAMALYRAASLALHVEVLDLQIAAGASHILGRVVKQHDRERSRVMLSRWLSGPSPAATTASRHAAALLQDAVLSLHDWDQTDAFHFPWCLYLATLTVWAFHAREGCVPKPTDLSSLIVAMTTSNAADLEGLAGQYDTRPLIRAMAQQLATVRWAVVHDAMKVLLNLGV.

2 C2H2-type zinc fingers span residues 8-32 (HACT…SLNH) and 41-63 (YTCQ…LDRH). A disordered region spans residues 74-168 (GKGVLETRKR…SIDDDGTDPD (95 aa)). A Nuclear localization signal(NLS) motif is present at residues 77 to 87 (VLETRKRMRRA). Residues 78-89 (LETRKRMRRAED) are compositionally biased toward basic and acidic residues. Residues 96–105 (PPKRPSRHQQ) are compositionally biased toward basic residues. Over residues 108–132 (GPPVGAPLSSSGSVSAGSGRSSRSP) the composition is skewed to low complexity. The short motif at 285-289 (LDIDL) is the Nuclear export signal (NES) element.

The protein localises to the nucleus. Transcription factor that specifically regulates the expression of the hxn gene cluster that mediates the degradation of nicotinate and related metabolites. In Emericella nidulans (strain FGSC A4 / ATCC 38163 / CBS 112.46 / NRRL 194 / M139) (Aspergillus nidulans), this protein is Nicotinate catabolism cluster-specific transcription factor.